Consider the following 310-residue polypeptide: Methionyl-tRNA formyltransferase (310 aa).

Position 106 to 109 (106 to 109 (SLLP)) interacts with (6S)-5,6,7,8-tetrahydrofolate.

It belongs to the Fmt family.

The enzyme catalyses L-methionyl-tRNA(fMet) + (6R)-10-formyltetrahydrofolate = N-formyl-L-methionyl-tRNA(fMet) + (6S)-5,6,7,8-tetrahydrofolate + H(+). Its function is as follows. Attaches a formyl group to the free amino group of methionyl-tRNA(fMet). The formyl group appears to play a dual role in the initiator identity of N-formylmethionyl-tRNA by promoting its recognition by IF2 and preventing the misappropriation of this tRNA by the elongation apparatus. This is Methionyl-tRNA formyltransferase from Fervidobacterium nodosum (strain ATCC 35602 / DSM 5306 / Rt17-B1).